A 113-amino-acid chain; its full sequence is Colicin-E1* immunity protein (113 aa).

This protein is able to protect a cell, which harbors the plasmid pKY-1 encoding colicin E1*, against colicin E1*. In Shigella sonnei, this protein is Colicin-E1* immunity protein (imm).